The chain runs to 239 residues: LexA repressor (239 aa).

The H-T-H motif DNA-binding region spans 26–46 (FDEMKEALDLASKSGIHRLIT). A disordered region spans residues 90 to 110 (GSLGKTPPPPARPAPVATNDD). Catalysis depends on for autocatalytic cleavage activity residues S160 and K198.

Belongs to the peptidase S24 family. As to quaternary structure, homodimer.

It catalyses the reaction Hydrolysis of Ala-|-Gly bond in repressor LexA.. Functionally, represses a number of genes involved in the response to DNA damage (SOS response), including recA and lexA. In the presence of single-stranded DNA, RecA interacts with LexA causing an autocatalytic cleavage which disrupts the DNA-binding part of LexA, leading to derepression of the SOS regulon and eventually DNA repair. In Brucella anthropi (strain ATCC 49188 / DSM 6882 / CCUG 24695 / JCM 21032 / LMG 3331 / NBRC 15819 / NCTC 12168 / Alc 37) (Ochrobactrum anthropi), this protein is LexA repressor.